Reading from the N-terminus, the 183-residue chain is 2-epi-5-epi-valiolone epimerase (183 aa).

Positions 11-155 constitute a VOC domain; the sequence is AVHHVAYTVP…WGMQLELINL (145 aa). H14, E76, H99, and E151 together coordinate a divalent metal cation.

Homodimer. A divalent metal cation is required as a cofactor.

The catalysed reaction is 2-epi-5-epi-valiolone = 5-epi-valiolone. The protein operates within antibiotic biosynthesis. Catalyzes the epimerization of 2-epi-5-epi-valiolone to 5-epi-valiolone. Involved in cetoniacytone A biosynthesis. This chain is 2-epi-5-epi-valiolone epimerase, found in Actinomyces sp.